A 639-amino-acid polypeptide reads, in one-letter code: tRNA uridine 5-carboxymethylaminomethyl modification enzyme MnmG (639 aa).

FAD contacts are provided by residues G13 to G18, V125, and S180. An NAD(+)-binding site is contributed by G273–F287. Q370 provides a ligand contact to FAD. The segment at K620 to A639 is disordered.

It belongs to the MnmG family. In terms of assembly, homodimer. Heterotetramer of two MnmE and two MnmG subunits. The cofactor is FAD.

The protein resides in the cytoplasm. Its function is as follows. NAD-binding protein involved in the addition of a carboxymethylaminomethyl (cmnm) group at the wobble position (U34) of certain tRNAs, forming tRNA-cmnm(5)s(2)U34. This is tRNA uridine 5-carboxymethylaminomethyl modification enzyme MnmG from Thioalkalivibrio sulfidiphilus (strain HL-EbGR7).